Here is a 332-residue protein sequence, read N- to C-terminus: RNA polymerase principal sigma factor HrdD (332 aa).

The segment at 1-25 (MATRAVARRQSATGETADSASSVRA) is disordered. A compositionally biased stretch (polar residues) spans 10–22 (QSATGETADSASS). The Polymerase core binding motif lies at 124 to 137 (DLIQEGNAGLVRAV). The H-T-H motif DNA-binding region spans 294-313 (LTEVGKEHGLTRERIRQIEK).

The protein belongs to the sigma-70 factor family.

In terms of biological role, sigma factors are initiation factors that promote the attachment of RNA polymerase to specific initiation sites and are then released. The protein is RNA polymerase principal sigma factor HrdD (hrdD) of Streptomyces viridifaciens.